The primary structure comprises 331 residues: Phenylalanine--tRNA ligase alpha subunit (331 aa).

Residue E252 coordinates Mg(2+).

Belongs to the class-II aminoacyl-tRNA synthetase family. Phe-tRNA synthetase alpha subunit type 1 subfamily. In terms of assembly, tetramer of two alpha and two beta subunits. Mg(2+) serves as cofactor.

Its subcellular location is the cytoplasm. It catalyses the reaction tRNA(Phe) + L-phenylalanine + ATP = L-phenylalanyl-tRNA(Phe) + AMP + diphosphate + H(+). The protein is Phenylalanine--tRNA ligase alpha subunit of Xanthomonas axonopodis pv. citri (strain 306).